A 62-amino-acid chain; its full sequence is MTFLFQLALAALVILSFAMIVGVPVAYASPQNWDSSKRLIFLGSGVWIGLVLVVAALNFLVV.

Helical transmembrane passes span 8 to 28 (ALAA…VAYA) and 41 to 61 (FLGS…NFLV).

Belongs to the PsbZ family. In terms of assembly, PSII is composed of 1 copy each of membrane proteins PsbA, PsbB, PsbC, PsbD, PsbE, PsbF, PsbH, PsbI, PsbJ, PsbK, PsbL, PsbM, PsbT, PsbX, PsbY, PsbZ, Psb30/Ycf12, peripheral proteins PsbO, CyanoQ (PsbQ), PsbU, PsbV and a large number of cofactors. It forms dimeric complexes.

The protein localises to the cellular thylakoid membrane. In terms of biological role, may control the interaction of photosystem II (PSII) cores with the light-harvesting antenna, regulates electron flow through the 2 photosystem reaction centers. PSII is a light-driven water plastoquinone oxidoreductase, using light energy to abstract electrons from H(2)O, generating a proton gradient subsequently used for ATP formation. The polypeptide is Photosystem II reaction center protein Z (Cyanothece sp. (strain PCC 7425 / ATCC 29141)).